The chain runs to 112 residues: cAMP-regulated phosphoprotein 19 (112 aa).

Methionine 1 carries the post-translational modification N-acetylmethionine. Positions methionine 1 to alanine 11 are enriched in low complexity. Residues methionine 1–leucine 49 are disordered. N-acetylserine is present on serine 2. 2 positions are modified to phosphoserine: serine 2 and serine 23. Over residues glutamate 12–leucine 32 the composition is skewed to basic and acidic residues. Phosphoserine; by GWL is present on residues serine 62 and serine 104. Positions asparagine 74–glycine 112 are disordered. At serine 104 the chain carries Phosphoserine; by PKA. Lysine 109 carries the post-translational modification N6-acetyllysine.

This sequence belongs to the endosulfine family. As to quaternary structure, interacts (when phosphorylated at Ser-62) with PPP2R2D. Interacts with SNCA. Interacts with PPP2R2A; the interaction is direct and this interaction inhibits PP2A activity. Phosphorylation at Ser-62 by MASTL/GWL during mitosis is essential for interaction with PPP2R2D (PR55-delta) and subsequent inactivation of PP2A. Phosphorylated by PKA.

The protein resides in the cytoplasm. Protein phosphatase inhibitor that specifically inhibits protein phosphatase 2A (PP2A) during mitosis. Inhibition of PP2A is enhanced when ARPP19 is phosphorylated. When phosphorylated at Ser-62 during mitosis, specifically interacts with PPP2R2D (PR55-delta) and inhibits its activity, leading to inactivation of PP2A, an essential condition to keep cyclin-B1-CDK1 activity high during M phase. May indirectly enhance GAP-43 expression by binding to the NGF-regulatory region of its mRNA. The protein is cAMP-regulated phosphoprotein 19 (Arpp19) of Mus musculus (Mouse).